An 828-amino-acid chain; its full sequence is Translation initiation factor IF-2 (828 aa).

2 disordered regions span residues 48-76 (SYSG…SEEF) and 112-148 (ASQE…ESTL). A compositionally biased stretch (polar residues) spans 49 to 58 (YSGSTTTLSL). Positions 65 to 74 (LETGSSSGSE) are enriched in low complexity. A compositionally biased stretch (acidic residues) spans 116–126 (DPIEVEQEESS). Residues 127-144 (DTNKVKEEPKIEEVKDIE) show a composition bias toward basic and acidic residues. The 171-residue stretch at 326–496 (SRAPVVTVMG…LLIAEMQNLK (171 aa)) folds into the tr-type G domain. The G1 stretch occupies residues 335 to 342 (GHVDHGKT). Residue 335–342 (GHVDHGKT) coordinates GTP. Positions 360-364 (GITQH) are G2. Positions 382–385 (DTPG) are G3. Residues 382-386 (DTPGH) and 436-439 (NKID) contribute to the GTP site. Residues 436–439 (NKID) form a G4 region. A G5 region spans residues 472–474 (SAL).

It belongs to the TRAFAC class translation factor GTPase superfamily. Classic translation factor GTPase family. IF-2 subfamily.

It is found in the cytoplasm. Its function is as follows. One of the essential components for the initiation of protein synthesis. Protects formylmethionyl-tRNA from spontaneous hydrolysis and promotes its binding to the 30S ribosomal subunits. Also involved in the hydrolysis of GTP during the formation of the 70S ribosomal complex. The chain is Translation initiation factor IF-2 from Rickettsia bellii (strain OSU 85-389).